A 405-amino-acid polypeptide reads, in one-letter code: Phosphopentomutase (405 aa).

Residues aspartate 10, aspartate 303, histidine 308, aspartate 344, histidine 345, and histidine 356 each coordinate Mn(2+).

The protein belongs to the phosphopentomutase family. Mn(2+) is required as a cofactor.

The protein resides in the cytoplasm. It catalyses the reaction 2-deoxy-alpha-D-ribose 1-phosphate = 2-deoxy-D-ribose 5-phosphate. It carries out the reaction alpha-D-ribose 1-phosphate = D-ribose 5-phosphate. It participates in carbohydrate degradation; 2-deoxy-D-ribose 1-phosphate degradation; D-glyceraldehyde 3-phosphate and acetaldehyde from 2-deoxy-alpha-D-ribose 1-phosphate: step 1/2. Isomerase that catalyzes the conversion of deoxy-ribose 1-phosphate (dRib-1-P) and ribose 1-phosphate (Rib-1-P) to deoxy-ribose 5-phosphate (dRib-5-P) and ribose 5-phosphate (Rib-5-P), respectively. This is Phosphopentomutase from Shewanella pealeana (strain ATCC 700345 / ANG-SQ1).